A 60-amino-acid polypeptide reads, in one-letter code: Cecropin-B1 (60 aa).

The signal sequence occupies residues 1–24 (MNFSKVFALVLLIGLVLLTGHTEA).

The protein belongs to the cecropin family.

It localises to the secreted. In terms of biological role, putative antimicrobial peptide. Partially neutralizes lipopolysaccharides (LPS). Exhibits anti-inflammatory properties: inhibits LPS-induced iNOS/NOS2 transcription, nitric oxide (NO) and pro-inflammatory cytokine production in mouse macrophages and human peripheral blood mononuclear cells (PBMCs); inhibits LPS-induced activation of MAPK and NF-kappa-B signaling pathways in mouse macrophages. In Aedes aegypti (Yellowfever mosquito), this protein is Cecropin-B1.